Here is a 331-residue protein sequence, read N- to C-terminus: Glutamyl-tRNA reductase (331 aa).

Substrate-binding positions include 49 to 52 (TCNR), Ser107, 112 to 114 (EDQ), and Gln118. The active-site Nucleophile is the Cys50. 184 to 189 (GNGEIG) is a binding site for NADP(+).

Belongs to the glutamyl-tRNA reductase family. In terms of assembly, homodimer.

It carries out the reaction (S)-4-amino-5-oxopentanoate + tRNA(Glu) + NADP(+) = L-glutamyl-tRNA(Glu) + NADPH + H(+). It functions in the pathway porphyrin-containing compound metabolism; protoporphyrin-IX biosynthesis; 5-aminolevulinate from L-glutamyl-tRNA(Glu): step 1/2. Its function is as follows. Catalyzes the NADPH-dependent reduction of glutamyl-tRNA(Glu) to glutamate 1-semialdehyde (GSA). The protein is Glutamyl-tRNA reductase of Acetivibrio thermocellus (strain ATCC 27405 / DSM 1237 / JCM 9322 / NBRC 103400 / NCIMB 10682 / NRRL B-4536 / VPI 7372) (Clostridium thermocellum).